Consider the following 387-residue polypeptide: 4-hydroxy-3-methylbut-2-en-1-yl diphosphate synthase (flavodoxin) (387 aa).

[4Fe-4S] cluster-binding residues include C272, C275, C307, and E314.

Belongs to the IspG family. Requires [4Fe-4S] cluster as cofactor.

The catalysed reaction is (2E)-4-hydroxy-3-methylbut-2-enyl diphosphate + oxidized [flavodoxin] + H2O + 2 H(+) = 2-C-methyl-D-erythritol 2,4-cyclic diphosphate + reduced [flavodoxin]. It functions in the pathway isoprenoid biosynthesis; isopentenyl diphosphate biosynthesis via DXP pathway; isopentenyl diphosphate from 1-deoxy-D-xylulose 5-phosphate: step 5/6. In terms of biological role, converts 2C-methyl-D-erythritol 2,4-cyclodiphosphate (ME-2,4cPP) into 1-hydroxy-2-methyl-2-(E)-butenyl 4-diphosphate. This Granulibacter bethesdensis (strain ATCC BAA-1260 / CGDNIH1) protein is 4-hydroxy-3-methylbut-2-en-1-yl diphosphate synthase (flavodoxin).